The following is a 294-amino-acid chain: Elongation factor Ts (294 aa).

The involved in Mg(2+) ion dislocation from EF-Tu stretch occupies residues 79 to 82 (TDFV).

Belongs to the EF-Ts family.

It is found in the cytoplasm. Associates with the EF-Tu.GDP complex and induces the exchange of GDP to GTP. It remains bound to the aminoacyl-tRNA.EF-Tu.GTP complex up to the GTP hydrolysis stage on the ribosome. This is Elongation factor Ts (tsf) from Geobacillus kaustophilus (strain HTA426).